A 192-amino-acid chain; its full sequence is Fe/S biogenesis protein NfuA (192 aa).

Residues cysteine 149 and cysteine 152 each contribute to the [4Fe-4S] cluster site.

Belongs to the NfuA family. As to quaternary structure, homodimer. [4Fe-4S] cluster is required as a cofactor.

Its function is as follows. Involved in iron-sulfur cluster biogenesis. Binds a 4Fe-4S cluster, can transfer this cluster to apoproteins, and thereby intervenes in the maturation of Fe/S proteins. Could also act as a scaffold/chaperone for damaged Fe/S proteins. The protein is Fe/S biogenesis protein NfuA of Aeromonas hydrophila subsp. hydrophila (strain ATCC 7966 / DSM 30187 / BCRC 13018 / CCUG 14551 / JCM 1027 / KCTC 2358 / NCIMB 9240 / NCTC 8049).